We begin with the raw amino-acid sequence, 218 residues long: MPPVCGRRCSRTGEIRGYSGSIVRRWKRVETRDGPRFRSSLAPHEAALLKNLAGAMIGLLDDRDSSSPSDELEEITGIKTGHAQRPGDPTLRRLLPDFYRPDDLDDDDPTAVDGSESFNAALRSLHEPEIIDAKRVAAQQLLDTVPDNGGRLELTESDANAWIAAVNDLRLALGVMLEIGPRGPERLPGNHPLAAHFNVYQWLTVLQEYLVLVLMGSR.

Residues 5–9 (CGRRC) carry the CXXXC motif. The cysteines at positions 5 and 9 are disulfide-linked.

The protein belongs to the AosR family. As to quaternary structure, homodimer. Under oxidative stress, interacts with the extracytoplasmic-function (ECF) RNA polymerase sigma factor SigH.

Activity is modulated by the formation of a disulfide bound within the N-terminal Cys-X-X-X-Cys (CXXXC) motif. This intramolecular disulfide bond is formed in response to oxidative stress, and results in oxidative stress-dependent interaction with the sigma factor SigH. Functionally, transcription factor crucial for intra-mycobacterial redox homeostasis and protection against host-derived oxidative and nitrosative radicals. In response to oxidative stress, interacts with the ECF sigma factor SigH and, in conjunction with SigH, binds to an auxiliary promoter upstream of mec-cysO-cysM, leading to the transcriptional activation of these genes encoding a non-canonical actinomycete-specific cysteine biosynthesis pathway. Increased transcription of mec-cysO-cysM results in enhanced production of L-cysteine and cysteine-derived antioxidant molecules. Increased production of cysteine protects mycobacteria cells from host phagocyte-derived oxidative and nitrosative stress, thus facilitating the mycobacterial growth in the host. This Mycobacterium bovis (strain ATCC BAA-935 / AF2122/97) protein is Oxidative stress regulator AosR.